The following is a 231-amino-acid chain: E3 ubiquitin-protein ligase At3g02290 (231 aa).

Basic and acidic residues predominate over residues 103-118 (GSSHSHEEVEPLRSDS). Positions 103–125 (GSSHSHEEVEPLRSDSDADSESF) are disordered. The RING-type; atypical zinc-finger motif lies at 181-222 (CPTCLEEYTSENPKIVTKCSHHFHLSCIYEWMERSENCPVCG).

Its subcellular location is the cytoplasm. The enzyme catalyses S-ubiquitinyl-[E2 ubiquitin-conjugating enzyme]-L-cysteine + [acceptor protein]-L-lysine = [E2 ubiquitin-conjugating enzyme]-L-cysteine + N(6)-ubiquitinyl-[acceptor protein]-L-lysine.. Its pathway is protein modification; protein ubiquitination. Its function is as follows. Mediates E2-dependent protein ubiquitination. The protein is E3 ubiquitin-protein ligase At3g02290 of Arabidopsis thaliana (Mouse-ear cress).